A 278-amino-acid chain; its full sequence is 4-hydroxy-tetrahydrodipicolinate reductase (278 aa).

Residues 16-21 (GAGGRM) and E42 contribute to the NAD(+) site. R43 is a binding site for NADP(+). NAD(+)-binding positions include 106 to 108 (GTT) and 130 to 133 (AGNY). H163 (proton donor/acceptor) is an active-site residue. Residue H164 coordinates (S)-2,3,4,5-tetrahydrodipicolinate. The active-site Proton donor is K167. 173–174 (GT) provides a ligand contact to (S)-2,3,4,5-tetrahydrodipicolinate.

The protein belongs to the DapB family.

It localises to the cytoplasm. The enzyme catalyses (S)-2,3,4,5-tetrahydrodipicolinate + NAD(+) + H2O = (2S,4S)-4-hydroxy-2,3,4,5-tetrahydrodipicolinate + NADH + H(+). It carries out the reaction (S)-2,3,4,5-tetrahydrodipicolinate + NADP(+) + H2O = (2S,4S)-4-hydroxy-2,3,4,5-tetrahydrodipicolinate + NADPH + H(+). It participates in amino-acid biosynthesis; L-lysine biosynthesis via DAP pathway; (S)-tetrahydrodipicolinate from L-aspartate: step 4/4. Functionally, catalyzes the conversion of 4-hydroxy-tetrahydrodipicolinate (HTPA) to tetrahydrodipicolinate. The protein is 4-hydroxy-tetrahydrodipicolinate reductase of Psychrobacter arcticus (strain DSM 17307 / VKM B-2377 / 273-4).